We begin with the raw amino-acid sequence, 430 residues long: tRNA-2-methylthio-N(6)-dimethylallyladenosine synthase (430 aa).

The MTTase N-terminal domain maps to Met-1 to Asn-110. [4Fe-4S] cluster-binding residues include Cys-10, Cys-46, Cys-75, Cys-146, Cys-150, and Cys-153. Positions Arg-132 to Glu-363 constitute a Radical SAM core domain. The region spanning Lys-366–Lys-427 is the TRAM domain.

The protein belongs to the methylthiotransferase family. MiaB subfamily. As to quaternary structure, monomer. [4Fe-4S] cluster is required as a cofactor.

The protein resides in the cytoplasm. The enzyme catalyses N(6)-dimethylallyladenosine(37) in tRNA + (sulfur carrier)-SH + AH2 + 2 S-adenosyl-L-methionine = 2-methylsulfanyl-N(6)-dimethylallyladenosine(37) in tRNA + (sulfur carrier)-H + 5'-deoxyadenosine + L-methionine + A + S-adenosyl-L-homocysteine + 2 H(+). In terms of biological role, catalyzes the methylthiolation of N6-(dimethylallyl)adenosine (i(6)A), leading to the formation of 2-methylthio-N6-(dimethylallyl)adenosine (ms(2)i(6)A) at position 37 in tRNAs that read codons beginning with uridine. This is tRNA-2-methylthio-N(6)-dimethylallyladenosine synthase from Fervidobacterium nodosum (strain ATCC 35602 / DSM 5306 / Rt17-B1).